Consider the following 61-residue polypeptide: Large ribosomal subunit protein uL30 (61 aa).

It belongs to the universal ribosomal protein uL30 family. In terms of assembly, part of the 50S ribosomal subunit.

In Bordetella petrii (strain ATCC BAA-461 / DSM 12804 / CCUG 43448), this protein is Large ribosomal subunit protein uL30.